The primary structure comprises 65 residues: Large ribosomal subunit protein bL35 (65 aa).

The segment at 30 to 65 (AFRSHLAQNKSTKQKRQSKHGTFMHPTDYKRLKDLM) is disordered. Basic and acidic residues predominate over residues 56-65 (TDYKRLKDLM).

The protein belongs to the bacterial ribosomal protein bL35 family.

The polypeptide is Large ribosomal subunit protein bL35 (Mycoplasma mobile (strain ATCC 43663 / 163K / NCTC 11711) (Mesomycoplasma mobile)).